A 338-amino-acid polypeptide reads, in one-letter code: Holliday junction branch migration complex subunit RuvB (338 aa).

Residues 4 to 184 (SDRLVSGKAR…FGISHHLQYY (181 aa)) form a large ATPase domain (RuvB-L) region. ATP is bound by residues Arg-24, Gly-65, Lys-68, Thr-69, Thr-70, 131-133 (EDY), Arg-174, Tyr-184, and Arg-221. Thr-69 is a binding site for Mg(2+). Residues 185 to 255 (HHDELTQIVM…LADEALELLA (71 aa)) form a small ATPAse domain (RuvB-S) region. Residues 258–338 (HLGFDALDRR…NIEVPDGRNS (81 aa)) are head domain (RuvB-H). DNA contacts are provided by Arg-294, Arg-313, and Arg-318.

This sequence belongs to the RuvB family. Homohexamer. Forms an RuvA(8)-RuvB(12)-Holliday junction (HJ) complex. HJ DNA is sandwiched between 2 RuvA tetramers; dsDNA enters through RuvA and exits via RuvB. An RuvB hexamer assembles on each DNA strand where it exits the tetramer. Each RuvB hexamer is contacted by two RuvA subunits (via domain III) on 2 adjacent RuvB subunits; this complex drives branch migration. In the full resolvosome a probable DNA-RuvA(4)-RuvB(12)-RuvC(2) complex forms which resolves the HJ.

It is found in the cytoplasm. It catalyses the reaction ATP + H2O = ADP + phosphate + H(+). Functionally, the RuvA-RuvB-RuvC complex processes Holliday junction (HJ) DNA during genetic recombination and DNA repair, while the RuvA-RuvB complex plays an important role in the rescue of blocked DNA replication forks via replication fork reversal (RFR). RuvA specifically binds to HJ cruciform DNA, conferring on it an open structure. The RuvB hexamer acts as an ATP-dependent pump, pulling dsDNA into and through the RuvAB complex. RuvB forms 2 homohexamers on either side of HJ DNA bound by 1 or 2 RuvA tetramers; 4 subunits per hexamer contact DNA at a time. Coordinated motions by a converter formed by DNA-disengaged RuvB subunits stimulates ATP hydrolysis and nucleotide exchange. Immobilization of the converter enables RuvB to convert the ATP-contained energy into a lever motion, pulling 2 nucleotides of DNA out of the RuvA tetramer per ATP hydrolyzed, thus driving DNA branch migration. The RuvB motors rotate together with the DNA substrate, which together with the progressing nucleotide cycle form the mechanistic basis for DNA recombination by continuous HJ branch migration. Branch migration allows RuvC to scan DNA until it finds its consensus sequence, where it cleaves and resolves cruciform DNA. This chain is Holliday junction branch migration complex subunit RuvB, found in Dichelobacter nodosus (strain VCS1703A).